A 326-amino-acid polypeptide reads, in one-letter code: N-acetyl-gamma-glutamyl-phosphate reductase (326 aa).

Cysteine 155 is a catalytic residue.

The protein belongs to the NAGSA dehydrogenase family. Type 1 subfamily.

It localises to the cytoplasm. The catalysed reaction is N-acetyl-L-glutamate 5-semialdehyde + phosphate + NADP(+) = N-acetyl-L-glutamyl 5-phosphate + NADPH + H(+). It participates in amino-acid biosynthesis; L-arginine biosynthesis; N(2)-acetyl-L-ornithine from L-glutamate: step 3/4. Catalyzes the NADPH-dependent reduction of N-acetyl-5-glutamyl phosphate to yield N-acetyl-L-glutamate 5-semialdehyde. This chain is N-acetyl-gamma-glutamyl-phosphate reductase, found in Shewanella loihica (strain ATCC BAA-1088 / PV-4).